A 444-amino-acid polypeptide reads, in one-letter code: Trigger factor (444 aa).

Positions 163–248 (GDFLTVDFVG…AKALKKAVAP (86 aa)) constitute a PPIase FKBP-type domain.

Belongs to the FKBP-type PPIase family. Tig subfamily.

The protein localises to the cytoplasm. It catalyses the reaction [protein]-peptidylproline (omega=180) = [protein]-peptidylproline (omega=0). In terms of biological role, involved in protein export. Acts as a chaperone by maintaining the newly synthesized protein in an open conformation. Functions as a peptidyl-prolyl cis-trans isomerase. In Granulibacter bethesdensis (strain ATCC BAA-1260 / CGDNIH1), this protein is Trigger factor.